Consider the following 615-residue polypeptide: 70 kDa neurofilament protein (615 aa).

Positions 1-31 (MSVTQKKTEISTTTTYEGESRPSSGMSGFSY) are disordered. The head stretch occupies residues 1–99 (MSVTQKKTEI…KANREREKQD (99 aa)). The span at 21-30 (RPSSGMSGFS) shows a compositional bias: polar residues. The IF rod domain maps to 96–449 (EKQDMRDLNE…KLLEGEESRV (354 aa)). Positions 100–135 (MRDLNERFANYIEKVRFLEAQNKKLAGELEELKSKW) are coil 1A. The linker 1 stretch occupies residues 136–145 (GKETSAIKEM). The tract at residues 146–284 (YETELEEARK…VHAQELKELA (139 aa)) is coil 1B. A linker 12 region spans residues 285-303 (ALAYRDTTAENREFWRNEL). The tract at residues 304–449 (AQAIRDIQQE…KLLEGEESRV (146 aa)) is coil 2. Residues 450 to 615 (GMKQIVEQVV…ANYTQNTVYQ (166 aa)) are tail. Positions 499-612 (AKTTYQRTSK…EDKANYTQNT (114 aa)) constitute an LTD domain.

The protein belongs to the intermediate filament family.

The sequence is that of 70 kDa neurofilament protein from Doryteuthis pealeii (Longfin inshore squid).